Reading from the N-terminus, the 85-residue chain is Small ribosomal subunit protein uS17 (85 aa).

Belongs to the universal ribosomal protein uS17 family. Part of the 30S ribosomal subunit.

Functionally, one of the primary rRNA binding proteins, it binds specifically to the 5'-end of 16S ribosomal RNA. In Syntrophus aciditrophicus (strain SB), this protein is Small ribosomal subunit protein uS17.